A 229-amino-acid polypeptide reads, in one-letter code: ATP-dependent dethiobiotin synthetase BioD (229 aa).

12–17 (GVGKTV) provides a ligand contact to ATP. Threonine 16 is a Mg(2+) binding site. Residue lysine 37 is part of the active site. Residue threonine 41 participates in substrate binding. ATP is bound by residues aspartate 53, 112 to 115 (EGAG), and 201 to 203 (PAG). Aspartate 53 and glutamate 112 together coordinate Mg(2+).

The protein belongs to the dethiobiotin synthetase family. Homodimer. Mg(2+) is required as a cofactor.

The protein localises to the cytoplasm. The catalysed reaction is (7R,8S)-7,8-diammoniononanoate + CO2 + ATP = (4R,5S)-dethiobiotin + ADP + phosphate + 3 H(+). It participates in cofactor biosynthesis; biotin biosynthesis; biotin from 7,8-diaminononanoate: step 1/2. Catalyzes a mechanistically unusual reaction, the ATP-dependent insertion of CO2 between the N7 and N8 nitrogen atoms of 7,8-diaminopelargonic acid (DAPA, also called 7,8-diammoniononanoate) to form a ureido ring. The chain is ATP-dependent dethiobiotin synthetase BioD from Mycobacterium sp. (strain JLS).